A 148-amino-acid polypeptide reads, in one-letter code: Transcriptional regulator MraZ (148 aa).

SpoVT-AbrB domains are found at residues 5-53 (ETAI…AEKE) and 82-125 (SAVL…SEQA).

It belongs to the MraZ family. Forms oligomers.

The protein resides in the cytoplasm. It is found in the nucleoid. This chain is Transcriptional regulator MraZ, found in Xanthomonas oryzae pv. oryzae (strain MAFF 311018).